Here is a 440-residue protein sequence, read N- to C-terminus: D-serine dehydratase (440 aa).

Position 116 is an N6-(pyridoxal phosphate)lysine (lysine 116).

The protein belongs to the serine/threonine dehydratase family. DsdA subfamily. Monomer. The cofactor is pyridoxal 5'-phosphate.

The catalysed reaction is D-serine = pyruvate + NH4(+). The chain is D-serine dehydratase from Salmonella dublin (strain CT_02021853).